The sequence spans 374 residues: Regulator of G-protein signaling 20 (374 aa).

Polar residues predominate over residues 1–11 (MPRLSQDNQQG). 2 disordered regions span residues 1–21 (MPRLSQDNQQGHQKHFSRPSR) and 135–158 (PPGGRLPREVDASAGQSSSIPPMG). Basic residues predominate over residues 12-21 (HQKHFSRPSR). Residues 248-364 (SFDKLMLTPA…MNSALYKDLL (117 aa)) form the RGS domain.

As to quaternary structure, forms a complex with G(alpha)z/i2 subunits and mu-opioid receptors; the formation of this complex results in mu-opioid receptor desensitization. Interacts with OPRM1. In terms of processing, fatty acylated. Heavily palmitoylated in the cysteine string motif. Post-translationally, N- and O-glycosylated in synapsomal membranes. Serine phosphorylated in synapsomal membranes. In terms of processing, sumoylated with SUMO1 and SUMO2 in synaptosomes. The sumoylated forms act as a scaffold for sequestering mu-opioid receptor-activated G(alpha) subunits. Retinal-specific. Expressed throughout the retina, including photoreceptors.

It is found in the membrane. Its subcellular location is the nucleus. The protein resides in the cytoplasm. Its function is as follows. Inhibits signal transduction by increasing the GTPase activity of G protein alpha subunits thereby driving them into their inactive GDP-bound form. Binds selectively to G(z)-alpha and G(alpha)-i2 subunits, accelerates their GTPase activity and regulates their signaling activities. The G(z)-alpha activity is inhibited by the phosphorylation and palmitoylation of the G-protein. Negatively regulates mu-opioid receptor-mediated activation of the G-proteins. The sequence is that of Regulator of G-protein signaling 20 (RGS20) from Bos taurus (Bovine).